The chain runs to 136 residues: UPF0299 membrane protein PM0880 (136 aa).

4 helical membrane passes run 5–25 (IVDL…GEWI), 29–49 (LNIG…GLTF), 67–87 (YMAL…DVLF), and 92–112 (VLLL…GLLS).

It belongs to the UPF0299 family.

It localises to the cell inner membrane. The polypeptide is UPF0299 membrane protein PM0880 (Pasteurella multocida (strain Pm70)).